A 193-amino-acid chain; its full sequence is Zinc finger protein 740 (193 aa).

The tract at residues 33-75 (SKQAENGERAGSPDVLRCSSQGHRKDSDKSRSRKDDDSLSEAS) is disordered. Lysine 34 participates in a covalent cross-link: Glycyl lysine isopeptide (Lys-Gly) (interchain with G-Cter in SUMO2). Serine 44 carries the post-translational modification Phosphoserine. Residues 55 to 69 (HRKDSDKSRSRKDDD) show a composition bias toward basic and acidic residues. 2 consecutive C2H2-type zinc fingers follow at residues 101 to 123 (FVCE…ILIH) and 129 to 151 (FECD…KRVH). The C2H2-type 3; atypical zinc finger occupies 157 to 179 (YQCERCHQCFSRTDRLLRHKRMC).

Belongs to the krueppel C2H2-type zinc-finger protein family.

It localises to the nucleus. Its function is as follows. May be involved in transcriptional regulation. This Homo sapiens (Human) protein is Zinc finger protein 740 (ZNF740).